A 332-amino-acid polypeptide reads, in one-letter code: L-lactate dehydrogenase A chain (332 aa).

NAD(+)-binding positions include 29–57 (GMVG…MEDK) and Arg-99. Substrate contacts are provided by Arg-106, Asn-138, and Arg-169. Asn-138 is an NAD(+) binding site. Residue His-193 is the Proton acceptor of the active site. Thr-248 lines the substrate pocket.

The protein belongs to the LDH/MDH superfamily. LDH family. In terms of assembly, homotetramer.

It localises to the cytoplasm. The enzyme catalyses (S)-lactate + NAD(+) = pyruvate + NADH + H(+). It functions in the pathway fermentation; pyruvate fermentation to lactate; (S)-lactate from pyruvate: step 1/1. In terms of biological role, interconverts simultaneously and stereospecifically pyruvate and lactate with concomitant interconversion of NADH and NAD(+). In Sphyraena idiastes (Pelican barracuda), this protein is L-lactate dehydrogenase A chain (ldha).